A 286-amino-acid polypeptide reads, in one-letter code: Beta-lactamase SHV-24 (286 aa).

The signal sequence occupies residues 1–21 (MRYIRLCIISLLATLPLAVHA). The Acyl-ester intermediate role is filled by serine 66. Cysteines 73 and 119 form a disulfide. The active-site Proton acceptor is the glutamate 164. Position 230-232 (230-232 (KTG)) interacts with substrate.

Belongs to the class-A beta-lactamase family.

The enzyme catalyses a beta-lactam + H2O = a substituted beta-amino acid. Its function is as follows. Hydrolyzes ampicillin. Can also hydrolyze cephaloridine, aztreonam and ceftazidime with a low catalytic rate. The sequence is that of Beta-lactamase SHV-24 (bla) from Escherichia coli.